We begin with the raw amino-acid sequence, 1299 residues long: Tubulin polyglutamylase TTLL5 (1299 aa).

The TTL domain occupies 62-407 (RYHLSYKIVR…VCQDPAQRAS (346 aa)). ATP contacts are provided by residues Lys180, 186–187 (RG), 208–211 (SRYI), and 221–223 (KFD). Arg186 lines the a protein pocket. An L-glutamate-binding site is contributed by Arg247. An ATP-binding site is contributed by 268–269 (TN). L-glutamate-binding residues include Tyr270, Ser271, and Lys293. Residues Asp353, Glu366, and Asn368 each contribute to the Mg(2+) site. The interval 378–488 (PLDLKIKASM…RGGFIRIFPT (111 aa)) is c-MTBD region. Residue Lys384 coordinates L-glutamate. Disordered regions lie at residues 589–626 (EMNVKTETESEEEEEVALDNEEEEQEASQEESAGFLRE), 832–853 (GTHSKSSKNNNSYSDSGAKGDH), 918–941 (SSVTTSDLSPGPGHHSSLSQIPSA), 1088–1130 (RSSA…RSLQ), and 1217–1275 (SSAT…QLNG). A compositionally biased stretch (acidic residues) spans 597-617 (ESEEEEEVALDNEEEEQEASQ). The span at 838 to 847 (SKNNNSYSDS) shows a compositional bias: low complexity. 3 stretches are compositionally biased toward polar residues: residues 1104–1130 (SGPTWSTQSDPQAPENHSSPPGSRSLQ), 1217–1230 (SSATASGQKPTTLP), and 1258–1275 (ATSQRASKGSSAEGQLNG).

This sequence belongs to the tubulin--tyrosine ligase family. In terms of assembly, interacts with the transcriptional coactivators NCOA1/SRC-1 and NCOA2/TIF2. Mg(2+) is required as a cofactor.

The protein localises to the cell projection. Its subcellular location is the cilium. It is found in the cytoplasm. It localises to the cytoskeleton. The protein resides in the cilium basal body. The protein localises to the nucleus. The enzyme catalyses L-glutamyl-[protein] + L-glutamate + ATP = gamma-L-glutamyl-L-glutamyl-[protein] + ADP + phosphate + H(+). The catalysed reaction is (L-glutamyl)(n)-gamma-L-glutamyl-L-glutamyl-[protein] + L-glutamate + ATP = (L-glutamyl)(n+1)-gamma-L-glutamyl-L-glutamyl-[protein] + ADP + phosphate + H(+). Polyglutamylase which modifies tubulin, generating polyglutamate side chains on the gamma-carboxyl group of specific glutamate residues within the C-terminal tail of tubulin. Preferentially mediates ATP-dependent initiation step of the polyglutamylation reaction over the elongation step. Preferentially modifies the alpha-tubulin tail over a beta-tail. Required for CCSAP localization to both polyglutamylated spindle and cilia microtubules. Increases the effects of transcriptional coactivator NCOA2/TIF2 in glucocorticoid receptor-mediated repression and induction and in androgen receptor-mediated induction. The sequence is that of Tubulin polyglutamylase TTLL5 (TTLL5) from Pongo abelii (Sumatran orangutan).